The primary structure comprises 58 residues: UPF0391 membrane protein Shew185_1413 (58 aa).

2 consecutive transmembrane segments (helical) span residues 6–26 (LVFL…IAGA) and 28–48 (AGIA…SLLI).

It belongs to the UPF0391 family.

The protein resides in the cell membrane. This is UPF0391 membrane protein Shew185_1413 from Shewanella baltica (strain OS185).